The primary structure comprises 229 residues: 2,3-bisphosphoglycerate-dependent phosphoglycerate mutase (229 aa).

Residues 7-14 (RHGQSEWN), 20-21 (TG), Arg59, 86-89 (ERHY), Lys97, 113-114 (RR), and 182-183 (GN) each bind substrate. The active-site Tele-phosphohistidine intermediate is His8. Catalysis depends on Glu86, which acts as the Proton donor/acceptor.

Belongs to the phosphoglycerate mutase family. BPG-dependent PGAM subfamily.

It carries out the reaction (2R)-2-phosphoglycerate = (2R)-3-phosphoglycerate. Its pathway is carbohydrate degradation; glycolysis; pyruvate from D-glyceraldehyde 3-phosphate: step 3/5. In terms of biological role, catalyzes the interconversion of 2-phosphoglycerate and 3-phosphoglycerate. The protein is 2,3-bisphosphoglycerate-dependent phosphoglycerate mutase of Listeria innocua serovar 6a (strain ATCC BAA-680 / CLIP 11262).